A 1102-amino-acid chain; its full sequence is Coiled-coil domain-containing protein AGAP005037 (1102 aa).

Positions 1-11 (MLIRWKSKDKS) are enriched in basic and acidic residues. 2 disordered regions span residues 1 to 69 (MLIR…HTLG) and 295 to 318 (HKSK…RGMY). A compositionally biased stretch (low complexity) spans 12–21 (SSSTSSSSST). Residues 50–65 (IDDRRRSARSREDPRR) show a composition bias toward basic and acidic residues. Positions 405-430 (HRIRVEHMERQLANLTGLVQKALTQN) form a coiled coil. Disordered stretches follow at residues 450-475 (RNAE…STCH) and 489-539 (DIQG…PLVM). Coiled coils occupy residues 554-579 (EVYN…LRRL) and 614-654 (DKER…EVIN). Disordered stretches follow at residues 745–774 (LPIP…PSPR), 832–958 (TKIS…CSDN), and 1031–1087 (LCGG…TLPP). Over residues 832 to 849 (TKISQSQLYPSEPVSSNV) the composition is skewed to polar residues. A compositionally biased stretch (pro residues) spans 867 to 881 (PPQPTRPTTGKPPVP). Positions 904 to 918 (TSSRSPLASPTSPHV) are enriched in low complexity. A compositionally biased stretch (polar residues) spans 936–958 (DCEQQQRTSEGTDSGSESVCSDN).

This is Coiled-coil domain-containing protein AGAP005037 from Anopheles gambiae (African malaria mosquito).